We begin with the raw amino-acid sequence, 63 residues long: Large ribosomal subunit protein bL28 (63 aa).

The protein belongs to the bacterial ribosomal protein bL28 family.

The protein is Large ribosomal subunit protein bL28 of Heliobacterium modesticaldum (strain ATCC 51547 / Ice1).